A 377-amino-acid polypeptide reads, in one-letter code: Metallo-hydrolase mfmC (377 aa).

Residues His126, His128, Asp130, His131, His209, and Asp233 each contribute to the Zn(2+) site.

Belongs to the metallo-beta-lactamase superfamily.

It functions in the pathway secondary metabolite biosynthesis; terpenoid biosynthesis. Functionally, metallo-hydrolase; part of the gene cluster that mediates the biosynthesis of the phthalide-terpenoid hybrid 11'-O-desmethylfendlerol. Within the pathway, mfma and mfmC act together to convert 3,5-dimethylorsellinic acid (DMOA) into the phthalide 5,7-dihydroxy-4-(hydroxymethyl)-6-methylphthalide. The biosynthesis of 11'-O-desmethylfendlerol begins with the NR-PKS mfmB that forms 3,5-dimethylorsellinic acid (DMOA), which is then transformed into the phthalide 5,7-dihydroxy-4-(hydroxymethyl)-6-methylphthalide by the cytochrome P450 monooxygenase mfmA and the hydrolase mfmC. Subsequently, the methyltransferase mfmE catalyzes 7-O-methylation to yield 5-hydroxy-4-(hydroxymethyl)-7-methoxy-6-methylphthalide, which undergoes C-3 hydroxylation by the cytochrome P450 monooxygenase mfmF. The resultant cyclopolic acid (2,5-dihydroxy-4-(hydroxymethyl)-7-methoxy-6-methylphthalide) is then farnesylated by the DMATS-type prenyltransferase mfmD to afford 5-O-farnesylcyclopolic acid. Finally, the Pyr4-family terpene cyclase mfmH cyclizes the farnesyl moiety of 5-O-farnesylcyclopolic acid into a drimane-like structure, thus completing the biosynthesis of 11'-O-desmethylfendlerol. The protein is Metallo-hydrolase mfmC of Annulohypoxylon moriforme (Filamentous fungus).